Reading from the N-terminus, the 325-residue chain is Glutarate 2-hydroxylase (325 aa).

The Fe cation site is built by H160, D162, and H292.

Belongs to the glutarate hydroxylase family. Homotetramer. Fe(2+) is required as a cofactor.

The enzyme catalyses glutarate + 2-oxoglutarate + O2 = (S)-2-hydroxyglutarate + succinate + CO2. Its pathway is amino-acid degradation. Its function is as follows. Acts as an alpha-ketoglutarate-dependent dioxygenase catalyzing hydroxylation of glutarate (GA) to L-2-hydroxyglutarate (L2HG). Functions in a L-lysine degradation pathway that proceeds via cadaverine, glutarate and L-2-hydroxyglutarate. The chain is Glutarate 2-hydroxylase from Pseudomonas putida (strain GB-1).